The following is a 786-amino-acid chain: Elastin (786 aa).

Residues M1–P26 form the signal peptide. P34 is modified (hydroxyproline). Hydroxyproline; partial occurs at positions 65, 67, and 88. Residues K104 and K107 each carry the allysine modification. A 4-hydroxyproline; partial modification is found at P116. A hydroxyproline; partial mark is found at P156, P167, P170, and P177. Position 190 is a 4-hydroxyproline; partial (P190). 3 positions are modified to allysine: K241, K261, and K265. Residues P283 and P286 each carry the 4-hydroxyproline; partial modification. P290 is subject to Hydroxyproline; partial. K312 and K315 each carry allysine. P327, P342, and P347 each carry 4-hydroxyproline; partial. Residues P352 and P355 each carry the hydroxyproline; partial modification. P360 is subject to 4-hydroxyproline; partial. Residues K375, K379, and K382 each carry the allysine modification. P415 is modified (4-hydroxyproline; partial). A Hydroxyproline; partial modification is found at P421. P427 is modified (4-hydroxyproline; partial). 2 positions are modified to allysine: K448 and K451. Position 465 is a hydroxyproline; partial (P465). P481 carries the post-translational modification 4-hydroxyproline; partial. Allysine occurs at positions 492 and 496. P522 and P550 each carry hydroxyproline; partial. Allysine is present on residues K558, K562, and K566. 4-hydroxyproline; partial is present on P580. 2 positions are modified to 4-hydroxyproline: P589 and P598. P607 carries the post-translational modification 4-hydroxyproline; partial. Positions E615–V645 are disordered. Low complexity predominate over residues P630–V645. P646 carries the post-translational modification Hydroxyproline; partial. Residues K653 and K656 each carry the allysine modification. The residue at position 677 (P677) is a 4-hydroxyproline; partial. Allysine occurs at positions 693, 697, 735, and 738. P769 and P772 each carry hydroxyproline; partial. A disulfide bridge connects residues C776 and C781.

It belongs to the elastin family. As to quaternary structure, the polymeric elastin chains are cross-linked together into an extensible 3D network. Forms a ternary complex with BGN and MFAP2. Interacts with MFAP2 via divalent cations (calcium &gt; magnesium &gt; manganese) in a dose-dependent and saturating manner. Interacts with FBLN5. Interacts with FBN1. Forms a ternary complex with FBN1 and FBLN2 or FBLN5. Interacts with MFAP4 in a Ca (2+)-dependent manner; this interaction promotes ELN self-assembly. Interacts with EFEMP2 with moderate affinity. In terms of processing, elastin is formed through the cross-linking of its soluble precursor tropoelastin. Cross-linking is initiated through the action of lysyl oxidase on exposed lysines to form allysine. Subsequent spontaneous condensation reactions with other allysine or unmodified lysine residues result in various bi-, tri-, and tetrafunctional cross-links. The most abundant cross-links in mature elastin fibers are lysinonorleucine, allysine aldol, desmosine, and isodesmosine. Hydroxylation on proline residues within the sequence motif, GXPG, is most likely 4-hydroxy as this fits the requirement for 4-hydroxylation in vertebrates. In terms of tissue distribution, expressed within the outer myometrial smooth muscle and throughout the arteriolar tree of uterus (at protein level). Also expressed in the large arteries, lung and skin.

It localises to the secreted. It is found in the extracellular space. The protein resides in the extracellular matrix. Major structural protein of tissues such as aorta and nuchal ligament, which must expand rapidly and recover completely. Molecular determinant of the late arterial morphogenesis, stabilizing arterial structure by regulating proliferation and organization of vascular smooth muscle. The polypeptide is Elastin (ELN) (Homo sapiens (Human)).